We begin with the raw amino-acid sequence, 277 residues long: RAD52 motif-containing protein 1 (277 aa).

Residues 15 to 95 form the RRM domain; that stretch reads QTLLVWGLEP…SPLKVCVCTK (81 aa).

Homodimer.

It is found in the nucleus. Its subcellular location is the cytoplasm. The protein resides in the nucleolus. In terms of biological role, confers resistance to the antitumor agent cisplatin. Binds preferentially to sites of DNA modified by cisplatin in vitro. Binds to double-stranded DNA in a cooperative manner resulting in the formation of filament-like structures. Binds to single-stranded DNA with no cooperativity. Binds to RNA. This is RAD52 motif-containing protein 1 (RDM1) from Gallus gallus (Chicken).